We begin with the raw amino-acid sequence, 240 residues long: Extracellular superoxide dismutase [Cu-Zn] (240 aa).

The signal sequence occupies residues 1–18; sequence MLALLCSCLLLAAGASDA. 2 disulfides stabilise this stretch: cysteine 63–cysteine 208 and cysteine 125–cysteine 207. An N-linked (GlcNAc...) asparagine glycan is attached at asparagine 107. Cu cation is bound by residues histidine 114, histidine 116, and histidine 131. Histidine 131, histidine 139, histidine 142, and aspartate 145 together coordinate Zn(2+). Residue histidine 181 participates in Cu cation binding. Lysine 229 and lysine 230 each carry an N-linked (Glc) (glycation) lysine; in vitro glycan.

This sequence belongs to the Cu-Zn superoxide dismutase family. As to quaternary structure, homotetramer. Directly interacts with ATP7A; this interaction is copper-dependent and is required for SOD3 activity. Cu cation serves as cofactor. The cofactor is Zn(2+). Expressed in blood vessels, heart, lung, kidney and placenta. Major SOD isoenzyme in extracellular fluids such as plasma, lymph and synovial fluid.

It is found in the secreted. Its subcellular location is the extracellular space. It localises to the golgi apparatus. The protein localises to the trans-Golgi network. It catalyses the reaction 2 superoxide + 2 H(+) = H2O2 + O2. Protect the extracellular space from toxic effect of reactive oxygen intermediates by converting superoxide radicals into hydrogen peroxide and oxygen. The sequence is that of Extracellular superoxide dismutase [Cu-Zn] (SOD3) from Homo sapiens (Human).